The primary structure comprises 368 residues: Chorismate synthase (368 aa).

Arg46 is an NADP(+) binding site. Residues 124–126, Gly284, 299–303, and Arg326 each bind FMN; these read RAS and KPTPS.

The protein belongs to the chorismate synthase family. Requires FMNH2 as cofactor.

The enzyme catalyses 5-O-(1-carboxyvinyl)-3-phosphoshikimate = chorismate + phosphate. It functions in the pathway metabolic intermediate biosynthesis; chorismate biosynthesis; chorismate from D-erythrose 4-phosphate and phosphoenolpyruvate: step 7/7. Catalyzes the anti-1,4-elimination of the C-3 phosphate and the C-6 proR hydrogen from 5-enolpyruvylshikimate-3-phosphate (EPSP) to yield chorismate, which is the branch point compound that serves as the starting substrate for the three terminal pathways of aromatic amino acid biosynthesis. This reaction introduces a second double bond into the aromatic ring system. This is Chorismate synthase from Pyrobaculum arsenaticum (strain DSM 13514 / JCM 11321 / PZ6).